A 269-amino-acid polypeptide reads, in one-letter code: MSRLEQRFAELKAEGRSALVTFVTAGDPGYDASLQILKGLPAAGADVIELGMPFTDPMADGVAIQLATLRALEAGQNLAKTLQMVREFRVDNQATPIVLMGYYNPIHRFGVEKFVAEAKEAGVDGLIIVDLPPEHDAELATPAQAAGIDFIRLTTPTTDDARLPRVLERSSGFVYYVSVAGVTGAGSATTEHVTEAIARLRRHTDLPISVGFGIRTPEQAAAIARLADGVVVGSALVDKIAQAKDADQAVADVLSLCSALAEGVRGARR.

Catalysis depends on proton acceptor residues E49 and D60.

It belongs to the TrpA family. Tetramer of two alpha and two beta chains.

The catalysed reaction is (1S,2R)-1-C-(indol-3-yl)glycerol 3-phosphate + L-serine = D-glyceraldehyde 3-phosphate + L-tryptophan + H2O. Its pathway is amino-acid biosynthesis; L-tryptophan biosynthesis; L-tryptophan from chorismate: step 5/5. Functionally, the alpha subunit is responsible for the aldol cleavage of indoleglycerol phosphate to indole and glyceraldehyde 3-phosphate. The protein is Tryptophan synthase alpha chain of Pseudomonas putida (strain W619).